A 420-amino-acid polypeptide reads, in one-letter code: 2,3-dimethylmalate dehydratase large subunit (420 aa).

Residues Cys-301, Cys-361, and Cys-364 each contribute to the [4Fe-4S] cluster site.

Belongs to the aconitase/IPM isomerase family. LeuC type 2 subfamily. Heterodimer of a large and a small subunit. It depends on [4Fe-4S] cluster as a cofactor.

The enzyme catalyses (2R,3S)-2,3-dimethylmalate = dimethylmaleate + H2O. It functions in the pathway cofactor degradation; nicotinate degradation; propanoate and pyruvate from 6-hydroxynicotinate: step 7/8. In Eubacterium barkeri (Clostridium barkeri), this protein is 2,3-dimethylmalate dehydratase large subunit (dmdA).